Reading from the N-terminus, the 334-residue chain is Thiamine thiazole synthase (334 aa).

Substrate-binding positions include Cys86, 107–108 (EA), Gly115, and Val183. Residue Cys221 is modified to 2,3-didehydroalanine (Cys). Substrate-binding positions include Asp223, His238, Met290, and 300–302 (RMG).

Belongs to the THI4 family. As to quaternary structure, homooctamer. Requires Fe cation as cofactor. Post-translationally, during the catalytic reaction, a sulfide is transferred from Cys-221 to a reaction intermediate, generating a dehydroalanine residue.

It is found in the cytoplasm. It localises to the nucleus. It catalyses the reaction [ADP-thiazole synthase]-L-cysteine + glycine + NAD(+) = [ADP-thiazole synthase]-dehydroalanine + ADP-5-ethyl-4-methylthiazole-2-carboxylate + nicotinamide + 3 H2O + 2 H(+). Involved in biosynthesis of the thiamine precursor thiazole. Catalyzes the conversion of NAD and glycine to adenosine diphosphate 5-(2-hydroxyethyl)-4-methylthiazole-2-carboxylic acid (ADT), an adenylated thiazole intermediate. The reaction includes an iron-dependent sulfide transfer from a conserved cysteine residue of the protein to a thiazole intermediate. The enzyme can only undergo a single turnover, which suggests it is a suicide enzyme. May have additional roles in adaptation to various stress conditions and in DNA damage tolerance. The chain is Thiamine thiazole synthase from Ajellomyces capsulatus (strain G186AR / H82 / ATCC MYA-2454 / RMSCC 2432) (Darling's disease fungus).